We begin with the raw amino-acid sequence, 598 residues long: Elongation factor 4 (598 aa).

The tr-type G domain occupies 2–184 (QHIRNFSIIA…TVVRRVPPPK (183 aa)). GTP contacts are provided by residues 14–19 (DHGKST) and 131–134 (NKID).

The protein belongs to the TRAFAC class translation factor GTPase superfamily. Classic translation factor GTPase family. LepA subfamily.

Its subcellular location is the cell inner membrane. It catalyses the reaction GTP + H2O = GDP + phosphate + H(+). Its function is as follows. Required for accurate and efficient protein synthesis under certain stress conditions. May act as a fidelity factor of the translation reaction, by catalyzing a one-codon backward translocation of tRNAs on improperly translocated ribosomes. Back-translocation proceeds from a post-translocation (POST) complex to a pre-translocation (PRE) complex, thus giving elongation factor G a second chance to translocate the tRNAs correctly. Binds to ribosomes in a GTP-dependent manner. This chain is Elongation factor 4, found in Aromatoleum aromaticum (strain DSM 19018 / LMG 30748 / EbN1) (Azoarcus sp. (strain EbN1)).